The following is a 129-amino-acid chain: Histone H2A-IV (129 aa).

The protein belongs to the histone H2A family. As to quaternary structure, the nucleosome is a histone octamer containing two molecules each of H2A, H2B, H3 and H4 assembled in one H3-H4 heterotetramer and two H2A-H2B heterodimers. The octamer wraps approximately 147 bp of DNA.

It localises to the nucleus. It is found in the chromosome. Functionally, core component of nucleosome. Nucleosomes wrap and compact DNA into chromatin, limiting DNA accessibility to the cellular machineries which require DNA as a template. Histones thereby play a central role in transcription regulation, DNA repair, DNA replication and chromosomal stability. DNA accessibility is regulated via a complex set of post-translational modifications of histones, also called histone code, and nucleosome remodeling. This chain is Histone H2A-IV, found in Volvox carteri (Green alga).